The primary structure comprises 440 residues: uncharacterized protein (440 aa).

Residues 1-19 form the signal peptide; sequence MKKLLLAASIIYFASVSLA.

This is an uncharacterized protein from Rickettsia typhi (strain ATCC VR-144 / Wilmington).